We begin with the raw amino-acid sequence, 368 residues long: Probable pectate lyase 4 (368 aa).

The first 25 residues, 1–25 (MASLVVIVSLLLAAFASPLLETAHS), serve as a signal peptide directing secretion. Asn-27 carries N-linked (GlcNAc...) asparagine glycosylation. Ca(2+) contacts are provided by Asp-167, Asp-191, and Asp-195. The active site involves Arg-247.

It belongs to the polysaccharide lyase 1 family. Ca(2+) serves as cofactor.

The enzyme catalyses Eliminative cleavage of (1-&gt;4)-alpha-D-galacturonan to give oligosaccharides with 4-deoxy-alpha-D-galact-4-enuronosyl groups at their non-reducing ends.. Its pathway is glycan metabolism; pectin degradation; 2-dehydro-3-deoxy-D-gluconate from pectin: step 2/5. The protein is Probable pectate lyase 4 of Arabidopsis thaliana (Mouse-ear cress).